The following is a 426-amino-acid chain: Glutamate-1-semialdehyde 2,1-aminomutase (426 aa).

Residue Lys-265 is modified to N6-(pyridoxal phosphate)lysine.

This sequence belongs to the class-III pyridoxal-phosphate-dependent aminotransferase family. HemL subfamily. In terms of assembly, homodimer. Requires pyridoxal 5'-phosphate as cofactor.

It is found in the cytoplasm. The catalysed reaction is (S)-4-amino-5-oxopentanoate = 5-aminolevulinate. It participates in porphyrin-containing compound metabolism; protoporphyrin-IX biosynthesis; 5-aminolevulinate from L-glutamyl-tRNA(Glu): step 2/2. The sequence is that of Glutamate-1-semialdehyde 2,1-aminomutase from Methylococcus capsulatus (strain ATCC 33009 / NCIMB 11132 / Bath).